Here is a 215-residue protein sequence, read N- to C-terminus: Cytochrome b6 (215 aa).

The helical transmembrane segment at 32 to 52 (IFYCLGGITLTCFLVQVATGF) threads the bilayer. Cys-35 provides a ligand contact to heme c. Residues His-86 and His-100 each coordinate heme b. 3 consecutive transmembrane segments (helical) span residues 90-110 (ASMM…TGGF), 116-136 (LTWV…VTGY), and 186-206 (LHTF…FPMI). Heme b is bound by residues His-187 and His-202.

It belongs to the cytochrome b family. PetB subfamily. The 4 large subunits of the cytochrome b6-f complex are cytochrome b6, subunit IV (17 kDa polypeptide, PetD), cytochrome f and the Rieske protein, while the 4 small subunits are PetG, PetL, PetM and PetN. The complex functions as a dimer. Heme b serves as cofactor. It depends on heme c as a cofactor.

The protein resides in the plastid. It localises to the chloroplast thylakoid membrane. Its function is as follows. Component of the cytochrome b6-f complex, which mediates electron transfer between photosystem II (PSII) and photosystem I (PSI), cyclic electron flow around PSI, and state transitions. This Nicotiana tomentosiformis (Tobacco) protein is Cytochrome b6.